Reading from the N-terminus, the 847-residue chain is Acyl-homoserine lactone acylase QuiP (847 aa).

Positions 1-26 (MASPAFMRFLPRCGAAAAFGTLLGLA) are cleaved as a signal peptide. Ser-265 (nucleophile) is an active-site residue.

Belongs to the peptidase S45 family. Heterodimer of an alpha subunit and a beta subunit processed from the same precursor.

The protein resides in the periplasm. It catalyses the reaction an N-acyl-L-homoserine lactone + H2O = L-homoserine lactone + a carboxylate. Functionally, catalyzes the deacylation of acyl-homoserine lactone (AHL or acyl-HSL), releasing homoserine lactone (HSL) and the corresponding fatty acid. Possesses a specificity for the degradation of long-chain acyl-HSLs (side chains of seven or more carbons in length). Appears to be the acyl-HSL acylase that underlies the ability of P.aeruginosa to degrade and utilize certain acyl-HSLs as growth nutrients, including one of its own quorum signals, 3-oxo-C12-HSL. Is thought to have a role in quorum quenching. This chain is Acyl-homoserine lactone acylase QuiP (quiP), found in Pseudomonas aeruginosa (strain ATCC 15692 / DSM 22644 / CIP 104116 / JCM 14847 / LMG 12228 / 1C / PRS 101 / PAO1).